The following is a 385-amino-acid chain: Chaperone protein DnaJ (385 aa).

The region spanning Asp5–Gly72 is the J domain. The interval Arg26–Lys48 is disordered. Over residues Asp35–Lys48 the composition is skewed to basic and acidic residues. Residues Gly145 to Gln223 form a CR-type zinc finger. Cys158, Cys161, Cys175, Cys178, Cys197, Cys200, Cys211, and Cys214 together coordinate Zn(2+). 4 CXXCXGXG motif repeats span residues Cys158 to Gly165, Cys175 to Gly182, Cys197 to Gly204, and Cys211 to Gly218. The tract at residues Phe362 to Lys385 is disordered.

It belongs to the DnaJ family. In terms of assembly, homodimer. The cofactor is Zn(2+).

Its subcellular location is the cytoplasm. Its function is as follows. Participates actively in the response to hyperosmotic and heat shock by preventing the aggregation of stress-denatured proteins and by disaggregating proteins, also in an autonomous, DnaK-independent fashion. Unfolded proteins bind initially to DnaJ; upon interaction with the DnaJ-bound protein, DnaK hydrolyzes its bound ATP, resulting in the formation of a stable complex. GrpE releases ADP from DnaK; ATP binding to DnaK triggers the release of the substrate protein, thus completing the reaction cycle. Several rounds of ATP-dependent interactions between DnaJ, DnaK and GrpE are required for fully efficient folding. Also involved, together with DnaK and GrpE, in the DNA replication of plasmids through activation of initiation proteins. The protein is Chaperone protein DnaJ of Leptothrix cholodnii (strain ATCC 51168 / LMG 8142 / SP-6) (Leptothrix discophora (strain SP-6)).